A 279-amino-acid chain; its full sequence is Presqualene diphosphate synthase (279 aa).

The protein belongs to the phytoene/squalene synthase family. HpnD subfamily.

It carries out the reaction 2 (2E,6E)-farnesyl diphosphate = presqualene diphosphate + diphosphate. The protein operates within secondary metabolite biosynthesis; hopanoid biosynthesis. Functionally, involved in the biosynthesis of the hopanoid precursor squalene (SQ) from farnesyl diphosphate (FPP). Catalyzes the first step, the formation of presqualene diphosphate (PSPP) from two molecules of FPP. This Sinorhizobium fredii (strain NBRC 101917 / NGR234) protein is Presqualene diphosphate synthase.